The sequence spans 444 residues: Tryptophan 5-hydroxylase 1 (444 aa).

In terms of domain architecture, ACT spans 19–94 (SLIFSLKNEV…NVLSVNLPDN (76 aa)). S58 carries the phosphoserine; by PKA modification. L-tryptophan-binding residues include Y235, R257, and T265. Fe cation contacts are provided by H272, H277, and E317. 2 residues coordinate L-tryptophan: S336 and I366.

It belongs to the biopterin-dependent aromatic amino acid hydroxylase family. As to quaternary structure, homotetramer. Interacts with DNAJC12. Fe(2+) serves as cofactor. Ubiquitinated, leading to its degradation by the proteasome. Ubiquitinated is triggered by phosphorylation. Post-translationally, phosphorylated; triggering degradation by the proteasome. As to expression, seems to be less widely expressed than isoform 1.

The catalysed reaction is (6R)-L-erythro-5,6,7,8-tetrahydrobiopterin + L-tryptophan + O2 = 5-hydroxy-L-tryptophan + (4aS,6R)-4a-hydroxy-L-erythro-5,6,7,8-tetrahydrobiopterin. It participates in aromatic compound metabolism; serotonin biosynthesis; serotonin from L-tryptophan: step 1/2. Functionally, oxidizes L-tryptophan to 5-hydroxy-l-tryptophan in the rate-determining step of serotonin biosynthesis. The sequence is that of Tryptophan 5-hydroxylase 1 (TPH1) from Homo sapiens (Human).